The chain runs to 259 residues: Thiazole synthase (259 aa).

Lys-99 functions as the Schiff-base intermediate with DXP in the catalytic mechanism. 1-deoxy-D-xylulose 5-phosphate contacts are provided by residues Gly-160, 187–188, and 209–210; these read AG and NT.

Belongs to the ThiG family. As to quaternary structure, homotetramer. Forms heterodimers with either ThiH or ThiS.

The protein localises to the cytoplasm. The catalysed reaction is [ThiS sulfur-carrier protein]-C-terminal-Gly-aminoethanethioate + 2-iminoacetate + 1-deoxy-D-xylulose 5-phosphate = [ThiS sulfur-carrier protein]-C-terminal Gly-Gly + 2-[(2R,5Z)-2-carboxy-4-methylthiazol-5(2H)-ylidene]ethyl phosphate + 2 H2O + H(+). It functions in the pathway cofactor biosynthesis; thiamine diphosphate biosynthesis. In terms of biological role, catalyzes the rearrangement of 1-deoxy-D-xylulose 5-phosphate (DXP) to produce the thiazole phosphate moiety of thiamine. Sulfur is provided by the thiocarboxylate moiety of the carrier protein ThiS. In vitro, sulfur can be provided by H(2)S. In Solibacter usitatus (strain Ellin6076), this protein is Thiazole synthase.